The following is a 211-amino-acid chain: Large ribosomal subunit protein uL3 (211 aa).

Glutamine 150 bears the N5-methylglutamine mark.

This sequence belongs to the universal ribosomal protein uL3 family. As to quaternary structure, part of the 50S ribosomal subunit. Forms a cluster with proteins L14 and L19. In terms of processing, methylated by PrmB.

One of the primary rRNA binding proteins, it binds directly near the 3'-end of the 23S rRNA, where it nucleates assembly of the 50S subunit. The protein is Large ribosomal subunit protein uL3 of Stutzerimonas stutzeri (strain A1501) (Pseudomonas stutzeri).